We begin with the raw amino-acid sequence, 443 residues long: Transcriptional adapter 2-alpha (443 aa).

Ser6 is subject to Phosphoserine. The ZZ-type zinc finger occupies 12–69; sequence SDKPPCRGCSSYLMEPYIKCAECGPPPFFLCLQCFTRGFEYKKHQSDHTYEIMTSDFP. Positions 17, 20, 31, 34, 42, 45, 55, and 59 each coordinate Zn(2+). One can recognise an SANT domain in the interval 70 to 122; the sequence is VLDPSWTAQEEMALLEAVMDCGFGNWQDVANQMCTKTKEECEKHYMKHFINNP. Glycyl lysine isopeptide (Lys-Gly) (interchain with G-Cter in SUMO2) cross-links involve residues Lys132 and Lys138. In terms of domain architecture, SWIRM spans 356–443; it reads NSGRRSAPPL…LIREGYITKA (88 aa). Residues 426–435 mediate DNA binding; sequence KTRKIYDFLI.

In terms of assembly, interacts with GCN5 and NR3C1. Associated with the P/CAF protein in the PCAF complex. Component of the PCAF complex, at least composed of TADA2L/ADA2, TADA3L/ADA3, TAF5L/PAF65-beta, TAF6L/PAF65-alpha, TAF10/TAFII30, TAF12/TAFII20, TAF9/TAFII31 and TRRAP. Component of the ADA2A-containing complex (ATAC), composed of KAT14, KAT2A, TADA2L, TADA3L, ZZ3, MBIP, WDR5, YEATS2, CCDC101 and DR1. Interacts with CCDC134.

Its subcellular location is the nucleus. The protein resides in the chromosome. Functionally, component of the ATAC complex, a complex with histone acetyltransferase activity on histones H3 and H4. Required for the function of some acidic activation domains, which activate transcription from a distant site. Binds double-stranded DNA. Binds dinucleosomes, probably at the linker region between neighboring nucleosomes. Plays a role in chromatin remodeling. May promote TP53/p53 'Lys-321' acetylation, leading to reduced TP53 stability and transcriptional activity. May also promote XRCC6 acetylation thus facilitating cell apoptosis in response to DNA damage. The sequence is that of Transcriptional adapter 2-alpha (Tada2a) from Rattus norvegicus (Rat).